The following is a 691-amino-acid chain: DNA ligase (691 aa).

Residues 41-45 (DAEYD), 90-91 (SL), and glutamate 130 contribute to the NAD(+) site. Lysine 132 (N6-AMP-lysine intermediate) is an active-site residue. Arginine 153, glutamate 190, lysine 307, and lysine 331 together coordinate NAD(+). The Zn(2+) site is built by cysteine 425, cysteine 428, cysteine 443, and cysteine 449. A BRCT domain is found at 610-691 (APQGVLAGKT…MHTLLEGHAR (82 aa)).

The protein belongs to the NAD-dependent DNA ligase family. LigA subfamily. Requires Mg(2+) as cofactor. The cofactor is Mn(2+).

The catalysed reaction is NAD(+) + (deoxyribonucleotide)n-3'-hydroxyl + 5'-phospho-(deoxyribonucleotide)m = (deoxyribonucleotide)n+m + AMP + beta-nicotinamide D-nucleotide.. In terms of biological role, DNA ligase that catalyzes the formation of phosphodiester linkages between 5'-phosphoryl and 3'-hydroxyl groups in double-stranded DNA using NAD as a coenzyme and as the energy source for the reaction. It is essential for DNA replication and repair of damaged DNA. The polypeptide is DNA ligase (Burkholderia pseudomallei (strain 668)).